Here is a 298-residue protein sequence, read N- to C-terminus: ADP/ATP translocase 1 (298 aa).

Over 1 to 7 the chain is Mitochondrial intermembrane; the sequence is MGDHAWS. At Gly-2 the chain carries N-acetylglycine. A Solcar 1 repeat occupies 6–98; sequence WSFLKDFLAG…FAFKDKYKQL (93 aa). Phosphoserine is present on Ser-7. The chain crosses the membrane as a helical span at residues 8–37; that stretch reads FLKDFLAGGVAAAVSKTAVAPIERVKLLLQ. Residues 38 to 74 lie on the Mitochondrial matrix side of the membrane; sequence VQHASKQISAEKQYKGIIDCVVRIPKEQGFLSFWRGN. An N6,N6,N6-trimethyllysine modification is found at Lys-52. A helical transmembrane segment spans residues 75 to 99; it reads LANVIRYFPTQALNFAFKDKYKQLF. Residues Arg-80 and Lys-92 each contribute to the ADP site. At 100–109 the chain is on the mitochondrial intermembrane side; the sequence is LGGVDRHKQF. A helical membrane pass occupies residues 110 to 130; that stretch reads WRYFAGNLASGGAAGATSLCF. 2 Solcar repeats span residues 111–201 and 212–297; these read RYFA…AKGM and VSWM…IKKY. The Mitochondrial matrix portion of the chain corresponds to 131 to 178; the sequence is VYPLDFARTRLAADVGKGAAQREFHGLGDCIIKIFKSDGLRGLYQGFN. N6-succinyllysine is present on Lys-147. Cys-160 carries the S-nitrosocysteine modification. A helical membrane pass occupies residues 179-199; sequence VSVQGIIIYRAAYFGVYDTAK. Residues 200–210 are Mitochondrial intermembrane-facing; the sequence is GMLPDPKNVHI. A helical transmembrane segment spans residues 211–231; that stretch reads FVSWMIAQSVTAVAGLVSYPF. The Mitochondrial matrix portion of the chain corresponds to 232–273; the sequence is DTVRRRMMMQSGRKGADIMYTGTVDCWRKIAKDEGAKAFFKG. Residue Arg-235 coordinates ADP. The interval 235-240 is important for transport activity; the sequence is RRRMMM. The Nucleotide carrier signature motif signature appears at 235 to 240; that stretch reads RRRMMM. Lys-245 and Lys-272 each carry N6-succinyllysine. Residues 274–291 form a helical membrane-spanning segment; sequence AWSNVLRGMGGAFVLVLY. At 292–298 the chain is on the mitochondrial intermembrane side; it reads DEIKKYV.

The protein belongs to the mitochondrial carrier (TC 2.A.29) family. In terms of assembly, monomer. Found in a complex with ARL2, ARL2BP and SLC25A4/ANT1. Interacts with ARL2BP. Interacts with ARHGAP11B, thereby inhibiting the mitochondrial permeability transition pore (mPTP). Interacts with TIMM44; leading to inhibit the presequence translocase TIMM23, thereby promoting stabilization of PINK1. (Microbial infection) Interacts with HIV-1 Vpr. Post-translationally, under cell death induction, transglutaminated by TGM2. Transglutamination leads to formation of covalent cross-links between a glutamine and the epsilon-amino group of a lysine residue, forming polymers. Expressed in erythrocytes (at protein level).

The protein localises to the mitochondrion inner membrane. The protein resides in the membrane. It catalyses the reaction ADP(in) + ATP(out) = ADP(out) + ATP(in). The catalysed reaction is H(+)(in) = H(+)(out). The matrix-open state (m-state) is inhibited by the membrane-permeable bongkrekic acid (BKA). The cytoplasmic-open state (c-state) is inhibited by the membrane-impermeable toxic inhibitor carboxyatractyloside (CATR). Proton transporter activity is inhibited by ADP:ATP antiporter activity. Functionally, ADP:ATP antiporter that mediates import of ADP into the mitochondrial matrix for ATP synthesis, and export of ATP out to fuel the cell. Cycles between the cytoplasmic-open state (c-state) and the matrix-open state (m-state): operates by the alternating access mechanism with a single substrate-binding site intermittently exposed to either the cytosolic (c-state) or matrix (m-state) side of the inner mitochondrial membrane. In addition to its ADP:ATP antiporter activity, also involved in mitochondrial uncoupling and mitochondrial permeability transition pore (mPTP) activity. Plays a role in mitochondrial uncoupling by acting as a proton transporter: proton transport uncouples the proton flows via the electron transport chain and ATP synthase to reduce the efficiency of ATP production and cause mitochondrial thermogenesis. Proton transporter activity is inhibited by ADP:ATP antiporter activity, suggesting that SLC25A4/ANT1 acts as a master regulator of mitochondrial energy output by maintaining a delicate balance between ATP production (ADP:ATP antiporter activity) and thermogenesis (proton transporter activity). Proton transporter activity requires free fatty acids as cofactor, but does not transport it. Also plays a key role in mPTP opening, a non-specific pore that enables free passage of the mitochondrial membranes to solutes of up to 1.5 kDa, and which contributes to cell death. It is however unclear if SLC25A4/ANT1 constitutes a pore-forming component of mPTP or regulates it. Acts as a regulator of mitophagy independently of ADP:ATP antiporter activity: promotes mitophagy via interaction with TIMM44, leading to inhibit the presequence translocase TIMM23, thereby promoting stabilization of PINK1. This is ADP/ATP translocase 1 from Homo sapiens (Human).